The chain runs to 952 residues: Ubiquitin carboxyl-terminal hydrolase 15 (952 aa).

At Ala-2 the chain carries N-acetylalanine. Residues 2 to 223 are mediates interaction with SART3; that stretch reads AEGGAADLDI…KNEDGTWPRG (222 aa). One can recognise a DUSP domain in the interval 7 to 118; sequence ADLDIQRSDI…GQEPIARKVV (112 aa). Thr-226 is modified (phosphothreonine). One can recognise a USP domain in the interval 260-904; sequence CGLSNLGNTC…AAYVLFYQRQ (645 aa). The Nucleophile role is filled by Cys-269. Thr-573 is subject to Phosphothreonine. Residues 598–666 form a disordered region; that stretch reads TEGSLHCCKD…GDNDSENGLC (69 aa). The segment covering 627–644 has biased composition (acidic residues); it reads METDEPDDESSQDQELPS. The active-site Proton acceptor is the His-862. The disordered stretch occupies residues 923–952; it reads SAATGIPLESDEDSNDNDNDIENENCMHTN. Residues 931-945 are compositionally biased toward acidic residues; sequence ESDEDSNDNDNDIEN. Phosphoserine is present on residues Ser-932 and Ser-936.

It belongs to the peptidase C19 family. As to quaternary structure, a homodimer structure has been reported; however it is unclear whether the protein form a homodimer in vivo. Identified in a complex with the COP9 signalosome complex (CSN). Interacts with SMAD1, SMAD2 and SMAD3; the interaction is direct. Forms a complex with SMURF2 and SMAD7. Interacts with TGFBR1. Interacts with SART3; the interaction is direct. May interact with RNF20 and RNF40. May interact with PRKN. Interacts with INCA1. Post-translationally, phosphorylated. Phosphorylation protects against ubiquitination and subsequent degradation by the proteasome. Ubiquitinated, leading to degradation by the proteasome.

The protein localises to the cytoplasm. Its subcellular location is the nucleus. It is found in the mitochondrion. The enzyme catalyses Thiol-dependent hydrolysis of ester, thioester, amide, peptide and isopeptide bonds formed by the C-terminal Gly of ubiquitin (a 76-residue protein attached to proteins as an intracellular targeting signal).. Functionally, hydrolase that removes conjugated ubiquitin from target proteins and regulates various pathways such as the TGF-beta receptor signaling, NF-kappa-B and RNF41/NRDP1-PRKN pathways. Acts as a key regulator of TGF-beta receptor signaling pathway, but the precise mechanism is still unclear: according to a report, acts by promoting deubiquitination of monoubiquitinated R-SMADs (SMAD1, SMAD2 and/or SMAD3), thereby alleviating inhibition of R-SMADs and promoting activation of TGF-beta target genes. According to another reports, regulates the TGF-beta receptor signaling pathway by mediating deubiquitination and stabilization of TGFBR1, leading to an enhanced TGF-beta signal. Able to mediate deubiquitination of monoubiquitinated substrates, 'Lys-27'-, 'Lys-48'- and 'Lys-63'-linked polyubiquitin chains. May also regulate gene expression and/or DNA repair through the deubiquitination of histone H2B. Acts as an inhibitor of mitophagy by counteracting the action of parkin (PRKN): hydrolyzes cleavage of 'Lys-48'- and 'Lys-63'-linked polyubiquitin chains attached by parkin on target proteins such as MFN2, thereby reducing parkin's ability to drive mitophagy. Acts as an associated component of COP9 signalosome complex (CSN) and regulates different pathways via this association: regulates NF-kappa-B by mediating deubiquitination of NFKBIA and deubiquitinates substrates bound to VCP. Involved in endosome organization by mediating deubiquitination of SQSTM1: ubiquitinated SQSTM1 forms a molecular bridge that restrains cognate vesicles in the perinuclear region and its deubiquitination releases target vesicles for fast transport into the cell periphery. Acts as a negative regulator of antifungal immunity by mediating 'Lys-27'-linked deubiquitination of CARD9, thereby inactivating CARD9. The sequence is that of Ubiquitin carboxyl-terminal hydrolase 15 (USP15) from Bos taurus (Bovine).